The primary structure comprises 613 residues: DBH-like monooxygenase protein 1 (613 aa).

The N-terminal stretch at 1–19 is a signal peptide; that stretch reads MCCWPLLLLWGLLPGTAAG. Over 20–592 the chain is Lumenal; the sequence is GSGRTYPHRT…TSSSSSLHRD (573 aa). A DOMON domain is found at 35 to 148; that stretch reads GKYWLGWSQR…STVRVIWAYH (114 aa). A glycan (N-linked (GlcNAc...) asparagine) is linked at asparagine 114. Tyrosine 203 is a catalytic residue. Intrachain disulfides connect cysteine 205–cysteine 257 and cysteine 242–cysteine 269. Histidine 235 and histidine 236 together coordinate Cu cation. Residue asparagine 247 is glycosylated (N-linked (GlcNAc...) asparagine). 4 residues coordinate Cu cation: histidine 307, histidine 389, histidine 391, and methionine 464. Cystine bridges form between cysteine 364–cysteine 480, cysteine 368–cysteine 550, and cysteine 443–cysteine 465. Histidine 389 is a catalytic residue. N-linked (GlcNAc...) asparagine glycans are attached at residues asparagine 476 and asparagine 517. Residues 593-613 form a helical membrane-spanning segment; sequence FSINLLVCLLLLSCTLSTKSL.

It belongs to the copper type II ascorbate-dependent monooxygenase family. Cu(2+) serves as cofactor. Post-translationally, N-glycosylated. In terms of tissue distribution, highly expressed in lung, kidney, brain and spinal cord.

It localises to the endoplasmic reticulum membrane. This is DBH-like monooxygenase protein 1 (MOXD1) from Homo sapiens (Human).